The following is a 302-amino-acid chain: AT-hook motif nuclear-localized protein 29 (302 aa).

The interval 1 to 95 (MDGGYDQSGG…KPPVIVTRDS (95 aa)) is disordered. Positions 32 to 44 (QLHPLPQPQPQPQ) are enriched in pro residues. The segment at residues 72 to 84 (KRPRGRPPGSKNK) is a DNA-binding region (a.T hook). In terms of domain architecture, PPC spans 96–241 (PNVLRSHVLE…DEGGEGGEGG (146 aa)). Positions 164–169 (GRFEIL) are required for the binding to non-AHL interactors. Positions 229–279 (PLEDEGGEGGEGGEVGEGGGGEGGPPPATSSSPPSGAGQGQLRGNMSGYDQ) are disordered. Positions 237–251 (GGEGGEVGEGGGGEG) are enriched in gly residues.

As to quaternary structure, homodimer. Interacts with AHL5, AHL12, AHL25, AHL27, TCP4, TCP13 and EF114. As to expression, expressed in the hypocotyl and the vascular tissue of seedling.

Its subcellular location is the nucleus. Transcription factor that specifically binds AT-rich DNA sequences related to the nuclear matrix attachment regions (MARs). Acts redundantly with AHL18, AHL22 and AHL27 in the regulation of flowering and regulation of the hypocotyl elongation. Acts redundantly with AHL27/ESC to modulate hypocotyl growth inhibition in response to light. This is AT-hook motif nuclear-localized protein 29 from Arabidopsis thaliana (Mouse-ear cress).